The sequence spans 110 residues: Integration host factor subunit alpha (110 aa).

It belongs to the bacterial histone-like protein family. As to quaternary structure, heterodimer of an alpha and a beta chain.

Its function is as follows. This protein is one of the two subunits of integration host factor, a specific DNA-binding protein that functions in genetic recombination as well as in transcriptional and translational control. In Delftia acidovorans (strain DSM 14801 / SPH-1), this protein is Integration host factor subunit alpha.